A 417-amino-acid chain; its full sequence is Serine hydroxymethyltransferase (417 aa).

Residues leucine 121 and 125–127 (GHL) contribute to the (6S)-5,6,7,8-tetrahydrofolate site. Lysine 229 bears the N6-(pyridoxal phosphate)lysine mark. Position 355–357 (355–357 (SPF)) interacts with (6S)-5,6,7,8-tetrahydrofolate.

This sequence belongs to the SHMT family. As to quaternary structure, homodimer. Pyridoxal 5'-phosphate is required as a cofactor.

It localises to the cytoplasm. It carries out the reaction (6R)-5,10-methylene-5,6,7,8-tetrahydrofolate + glycine + H2O = (6S)-5,6,7,8-tetrahydrofolate + L-serine. The protein operates within one-carbon metabolism; tetrahydrofolate interconversion. Its pathway is amino-acid biosynthesis; glycine biosynthesis; glycine from L-serine: step 1/1. Catalyzes the reversible interconversion of serine and glycine with tetrahydrofolate (THF) serving as the one-carbon carrier. This reaction serves as the major source of one-carbon groups required for the biosynthesis of purines, thymidylate, methionine, and other important biomolecules. Also exhibits THF-independent aldolase activity toward beta-hydroxyamino acids, producing glycine and aldehydes, via a retro-aldol mechanism. This Enterobacter sp. (strain 638) protein is Serine hydroxymethyltransferase.